The following is a 468-amino-acid chain: Glutamate--tRNA ligase (468 aa).

Positions 12 to 22 (PSPTGMMHIGT) match the 'HIGH' region motif. The short motif at 238 to 242 (KLSKR) is the 'KMSKS' region element. Lysine 241 provides a ligand contact to ATP.

The protein belongs to the class-I aminoacyl-tRNA synthetase family. Glutamate--tRNA ligase type 1 subfamily. As to quaternary structure, monomer.

The protein localises to the cytoplasm. The catalysed reaction is tRNA(Glu) + L-glutamate + ATP = L-glutamyl-tRNA(Glu) + AMP + diphosphate. Catalyzes the attachment of glutamate to tRNA(Glu) in a two-step reaction: glutamate is first activated by ATP to form Glu-AMP and then transferred to the acceptor end of tRNA(Glu). The chain is Glutamate--tRNA ligase from Phenylobacterium zucineum (strain HLK1).